The sequence spans 149 residues: Transcriptional repressor NrdR (149 aa).

Residues 3 to 34 (CPFCFAVDTKVIDSRLVGEGSSVRRRRQCLVC) fold into a zinc finger. The region spanning 49–139 (PRVVKSNDVR…VYRSFEDIRE (91 aa)) is the ATP-cone domain.

It belongs to the NrdR family. Zn(2+) is required as a cofactor.

Functionally, negatively regulates transcription of bacterial ribonucleotide reductase nrd genes and operons by binding to NrdR-boxes. The polypeptide is Transcriptional repressor NrdR (Cronobacter sakazakii (strain ATCC BAA-894) (Enterobacter sakazakii)).